An 87-amino-acid chain; its full sequence is UPF0367 protein Syncc9902_0316 (87 aa).

This sequence belongs to the UPF0367 family.

The polypeptide is UPF0367 protein Syncc9902_0316 (Synechococcus sp. (strain CC9902)).